We begin with the raw amino-acid sequence, 1308 residues long: Transposon TX1 uncharacterized 149 kDa protein (1308 aa).

The Reverse transcriptase domain maps to 494–765; the sequence is EAFKKGELPL…KIIKYLGVYL (272 aa).

The polypeptide is Transposon TX1 uncharacterized 149 kDa protein (Xenopus laevis (African clawed frog)).